The chain runs to 213 residues: tRNA (guanine-N(7)-)-methyltransferase (213 aa).

Aspartate 44, glutamate 69, asparagine 96, and aspartate 119 together coordinate S-adenosyl-L-methionine. Aspartate 119 is a catalytic residue. Substrate-binding residues include lysine 123 and aspartate 155.

The protein belongs to the class I-like SAM-binding methyltransferase superfamily. TrmB family.

It catalyses the reaction guanosine(46) in tRNA + S-adenosyl-L-methionine = N(7)-methylguanosine(46) in tRNA + S-adenosyl-L-homocysteine. Its pathway is tRNA modification; N(7)-methylguanine-tRNA biosynthesis. Functionally, catalyzes the formation of N(7)-methylguanine at position 46 (m7G46) in tRNA. In Thermosynechococcus vestitus (strain NIES-2133 / IAM M-273 / BP-1), this protein is tRNA (guanine-N(7)-)-methyltransferase.